The following is a 394-amino-acid chain: Elongation factor Tu 1 (394 aa).

Positions 10 to 204 (KPHVNVGTIG…ALDTYIPEPE (195 aa)) constitute a tr-type G domain. Residues 19-26 (GHVDHGKT) form a G1 region. 19–26 (GHVDHGKT) contacts GTP. A Mg(2+)-binding site is contributed by Thr-26. The interval 60–64 (GITIS) is G2. A G3 region spans residues 81–84 (DCPG). Residues 81-85 (DCPGH) and 136-139 (NKCD) contribute to the GTP site. Positions 136-139 (NKCD) are G4. Positions 174–176 (SAL) are G5.

This sequence belongs to the TRAFAC class translation factor GTPase superfamily. Classic translation factor GTPase family. EF-Tu/EF-1A subfamily. As to quaternary structure, monomer.

The protein resides in the cytoplasm. The catalysed reaction is GTP + H2O = GDP + phosphate + H(+). Its function is as follows. GTP hydrolase that promotes the GTP-dependent binding of aminoacyl-tRNA to the A-site of ribosomes during protein biosynthesis. The chain is Elongation factor Tu 1 from Vibrio vulnificus (strain CMCP6).